The sequence spans 157 residues: uncharacterized protein (157 aa).

Positions 6–157 (HDELFQAIQQ…AFFNLWIKYM (152 aa)) constitute an HTH marR-type domain. Positions 66–89 (NSFLASRLHISKAAVSKAVHALLK) form a DNA-binding region, H-T-H motif.

The protein localises to the cytoplasm. This is an uncharacterized protein from Bacillus subtilis (strain 168).